A 225-amino-acid chain; its full sequence is 3-dehydroquinate dehydratase (225 aa).

Residues 30-32 and Arg-62 each bind 3-dehydroquinate; that span reads EWR. Residue His-118 is the Proton donor/acceptor of the active site. The active-site Schiff-base intermediate with substrate is Lys-143. Arg-186 and Gln-209 together coordinate 3-dehydroquinate.

It belongs to the type-I 3-dehydroquinase family. Homodimer.

It carries out the reaction 3-dehydroquinate = 3-dehydroshikimate + H2O. Its pathway is metabolic intermediate biosynthesis; chorismate biosynthesis; chorismate from D-erythrose 4-phosphate and phosphoenolpyruvate: step 3/7. In terms of biological role, involved in the third step of the chorismate pathway, which leads to the biosynthesis of aromatic amino acids. Catalyzes the cis-dehydration of 3-dehydroquinate (DHQ) and introduces the first double bond of the aromatic ring to yield 3-dehydroshikimate. The polypeptide is 3-dehydroquinate dehydratase (Streptococcus agalactiae serotype Ia (strain ATCC 27591 / A909 / CDC SS700)).